A 406-amino-acid chain; its full sequence is Alpha-1-antitrypsin (406 aa).

Positions 1 to 24 (MTSSISWGLLLLAGLCCLVPSFLA) are cleaved as a signal peptide. Ser-33 bears the Phosphoserine mark. N-linked (GlcNAc...) asparagine glycans are attached at residues Asn-59, Asn-96, and Asn-260. The interval 362 to 381 (GTTVLEAVPMSIPPDVCFKN) is RCL. Ser-372 is modified (phosphoserine).

This sequence belongs to the serpin family. In terms of assembly, interacts with CELA2A. Interacts with ERGIC3 and LMAN1/ERGIC53. Interacts with PRSS1/Trypsin. As to expression, plasma.

The protein resides in the secreted. Inhibitor of serine proteases. Can inhibit elastase, trypsin, chymotrypsin and plasmin. This is Alpha-1-antitrypsin from Meriones unguiculatus (Mongolian jird).